The chain runs to 879 residues: Alanine--tRNA ligase (879 aa).

Zn(2+)-binding residues include histidine 567, histidine 571, cysteine 669, and histidine 673.

This sequence belongs to the class-II aminoacyl-tRNA synthetase family. The cofactor is Zn(2+).

It localises to the cytoplasm. The enzyme catalyses tRNA(Ala) + L-alanine + ATP = L-alanyl-tRNA(Ala) + AMP + diphosphate. Catalyzes the attachment of alanine to tRNA(Ala) in a two-step reaction: alanine is first activated by ATP to form Ala-AMP and then transferred to the acceptor end of tRNA(Ala). Also edits incorrectly charged Ser-tRNA(Ala) and Gly-tRNA(Ala) via its editing domain. This is Alanine--tRNA ligase from Levilactobacillus brevis (strain ATCC 367 / BCRC 12310 / CIP 105137 / JCM 1170 / LMG 11437 / NCIMB 947 / NCTC 947) (Lactobacillus brevis).